A 476-amino-acid polypeptide reads, in one-letter code: NADH-quinone oxidoreductase subunit N (476 aa).

14 helical membrane passes run 4–24 (LLALSPLILVCATAIVVMLTI), 32–52 (LTATLTVVGLNLALAAQVVAW), 67–87 (GLAVFGGVLILIATLACATLG), 100–117 (EYYLLLLCAAAGGLALVS), 121–141 (LAALFFGLELLSMPLYGMLAY), 155–175 (YMVLSAAASAFLLFGMALLYS), 198–218 (LMAGMGMMLIGLGFKLSIVPF), 230–250 (PAPAATFLASASKVAVLLVLL), 263–283 (LHSLLAVLAFVTMLVGNLLAL), 291–311 (LLGYSSIAHFGYLLVALVVND), 319–339 (ALYLVTYVLTTLGAFGVVTLL), 366–386 (AVLTVMMLSLAGIPFTAGFIG), 406–426 (VVAGSAIGLYYYLRVMVTLFL), and 447–467 (VVVLGLAALVVVLGVYPAPMI).

Belongs to the complex I subunit 2 family. As to quaternary structure, NDH-1 is composed of 14 different subunits. Subunits NuoA, H, J, K, L, M, N constitute the membrane sector of the complex.

The protein localises to the cell inner membrane. It carries out the reaction a quinone + NADH + 5 H(+)(in) = a quinol + NAD(+) + 4 H(+)(out). NDH-1 shuttles electrons from NADH, via FMN and iron-sulfur (Fe-S) centers, to quinones in the respiratory chain. The immediate electron acceptor for the enzyme in this species is believed to be ubiquinone. Couples the redox reaction to proton translocation (for every two electrons transferred, four hydrogen ions are translocated across the cytoplasmic membrane), and thus conserves the redox energy in a proton gradient. The protein is NADH-quinone oxidoreductase subunit N of Chromohalobacter salexigens (strain ATCC BAA-138 / DSM 3043 / CIP 106854 / NCIMB 13768 / 1H11).